A 303-amino-acid polypeptide reads, in one-letter code: Phytochrome-associated serine/threonine-protein phosphatase 1 (303 aa).

4 residues coordinate Zn(2+): D50, H52, D78, and N110. The Proton donor role is filled by H111. 2 residues coordinate Zn(2+): H160 and H234.

It belongs to the PPP phosphatase family. PP-6 (PP-V) subfamily. In terms of assembly, interacts with PHYA and PHYB, mostly when they are phosphorylated and in Pfr forms. Interacts with TAP46. Interacts with PIN1 and PIN2. Interacts with ABI5. Interacts with PIF3 and PIF4. Protein phosphatase 6 (PP6) holoenzyme is a heterotrimeric complex formed by the catalytic subunit FYPP, a SAPS domain-containing subunit (SAL) and a protein phosphatase 2A regulatory subunit A (PP2AA). Requires Zn(2+) as cofactor. As to expression, mostly expressed in flowers. Also detected to a lower extent in stems and leaves. Expressed in roots.

The protein resides in the cytoplasm. The catalysed reaction is O-phospho-L-seryl-[protein] + H2O = L-seryl-[protein] + phosphate. It catalyses the reaction O-phospho-L-threonyl-[protein] + H2O = L-threonyl-[protein] + phosphate. Its function is as follows. Catalytic subunit of protein phosphatase 6 (PP6). Dephosphorylates phosphorylated phytochromes, with a preference toward Pfr forms. Plays a major role in the photoperiodic control of flowering time in long days by modulating phytochrome signals in flowering time control. Involved in the regulation of polar auxin transport in roots. Dephosphorylates directly the auxin efflux carriers PIN1 and PIN2, thus promoting their proper polar localization in root cell plasma membrane. Acts antagonistically with the protein kinase PID to regulate the reversible phosphorylation of PIN and polar targeting, subsequently impacting polar auxin transport and plant development. Involved in the regulation of abscisic acid (ABA) signaling during seed germination and postgermination seedling growth. Functions as a negative regulator of ABA signaling through direct dephosphorylation and destabilization of ABI5. Acts antagonistically with the protein kinase SRK2E/SNRK2.6 to regulate ABI5 phosphorylation and ABA responses. Involved in the regulation of phosphorylation status in hypocotyl phototropism. Involved in the negative regulation of photomorphogenesis by controlling the stability and transcriptional activity of PIF3 and PIF4 proteins in the dark, via the regulation of their phosphorylation status. The protein is Phytochrome-associated serine/threonine-protein phosphatase 1 of Arabidopsis thaliana (Mouse-ear cress).